The chain runs to 290 residues: Arginine N-acetyltransferase avaD (290 aa).

Residue 157 to 163 participates in acetyl-CoA binding; sequence NQAHFEA.

This sequence belongs to the acetyltransferase family. GCN5 subfamily.

It functions in the pathway secondary metabolite metabolism. Functionally, arginine N-acetyltransferase; part of the cluster that mediates the biosynthesis of a highly modified cyclo-arginine-tryptophan dipeptide (cRW). Within the pathway, avaD catalyzes the N-acetylation of the guanidine group. The first step of the pathway is perfornmed by the arginine-containing cyclodipeptide synthase (RCPDS) avaA that acts as the scaffold-generating enzyme and is responsible for formation of the cyclo-Arg-Trp (cRW) diketopiperazine. AvaB then acts as a multifunctional flavoenzyme that is responsible for generating the cyclo-Arg-formylkynurenine DKP, which can be deformylated by avaC. AvaB then further catalyzes an additional N-oxidation followed by cyclization and dehydration. The next step is an N-acetylation of the guanidine group catalyzed by the arginine N-acetyltransferase avaD. The roles of the additional enzymes identified within the ava cluster still have to be determined. This chain is Arginine N-acetyltransferase avaD, found in Aspergillus versicolor.